Reading from the N-terminus, the 132-residue chain is Ig kappa chain V-III region MOPC 321 (132 aa).

Residues 1–20 (METDTLLLWVLLLWVPGSTG) form the signal peptide. The framework-1 stretch occupies residues 21 to 43 (DIVLTQSPASLAVSLGQRATISC). An intrachain disulfide couples cysteine 43 to cysteine 112. Residues 44 to 58 (RASKSVNTYGNSFMZ) form a complementarity-determining-1 region. The interval 59 to 73 (WYZZKPGZPPKLLIY) is framework-2. The segment at 74–80 (RASNLZS) is complementarity-determining-2. The tract at residues 81–112 (GIPARFSGSGSRTBFTLTIBPVZABDVATYFC) is framework-3. The tract at residues 113-121 (ZZSBZBPWT) is complementarity-determining-3. Residues 122–131 (FGSGTKLEIK) form a framework-4 region.

This chain is Ig kappa chain V-III region MOPC 321, found in Mus musculus (Mouse).